The chain runs to 251 residues: Hydroxyacylglutathione hydrolase (251 aa).

The Zn(2+) site is built by His-53, His-55, Asp-57, His-58, His-110, Asp-127, and His-165.

It belongs to the metallo-beta-lactamase superfamily. Glyoxalase II family. Monomer. Zn(2+) serves as cofactor.

The catalysed reaction is an S-(2-hydroxyacyl)glutathione + H2O = a 2-hydroxy carboxylate + glutathione + H(+). It participates in secondary metabolite metabolism; methylglyoxal degradation; (R)-lactate from methylglyoxal: step 2/2. Its function is as follows. Thiolesterase that catalyzes the hydrolysis of S-D-lactoyl-glutathione to form glutathione and D-lactic acid. The chain is Hydroxyacylglutathione hydrolase from Salmonella arizonae (strain ATCC BAA-731 / CDC346-86 / RSK2980).